Consider the following 442-residue polypeptide: GTPase Der (442 aa).

EngA-type G domains lie at 2–167 and 175–351; these read RTIA…PIQN and FKFC…EQAM. GTP-binding positions include 8 to 15, 55 to 59, 119 to 122, 181 to 188, 228 to 232, and 293 to 296; these read GKPNVGKS, DTGGI, NKIE, GRPNVGKS, DTAGI, and NKWD. The region spanning 352 to 436 is the KH-like domain; sequence RKIATSLLND…PITLYWQDKN (85 aa).

The protein belongs to the TRAFAC class TrmE-Era-EngA-EngB-Septin-like GTPase superfamily. EngA (Der) GTPase family. As to quaternary structure, associates with the 50S ribosomal subunit.

In terms of biological role, GTPase that plays an essential role in the late steps of ribosome biogenesis. This Ureaplasma parvum serovar 3 (strain ATCC 27815 / 27 / NCTC 11736) protein is GTPase Der.